The following is a 507-amino-acid chain: Protein O-glucosyltransferase 3 (507 aa).

The N-terminal stretch at 1 to 20 (MRRLPRALLLQLRLALLVAA) is a signal peptide. Residues 24–134 (EVLVSAPRSL…VAQSPYILKG (111 aa)) form a Filamin repeat. Asn61 and Asn306 each carry an N-linked (GlcNAc...) asparagine glycan. Positions 504–507 (REEL) match the Prevents secretion from ER motif.

The protein belongs to the KDELC family.

Its subcellular location is the endoplasmic reticulum lumen. It carries out the reaction L-seryl-[EGF-like domain protein] + UDP-alpha-D-glucose = 3-O-(beta-D-glucosyl)-L-seryl-[EGF-like domain protein] + UDP + H(+). The catalysed reaction is L-seryl-[EGF-like domain protein] + UDP-alpha-D-xylose = 3-O-(beta-D-xylosyl)-L-seryl-[EGF-like domain protein] + UDP + H(+). It participates in protein modification; protein glycosylation. Its function is as follows. Protein glucosyltransferase that catalyzes the transfer of glucose from UDP-glucose to a serine residue within the consensus sequence peptide C-X-N-T-X-G-S-F-X-C. Can also catalyze the transfer of xylose from UDP-xylose but less efficiently. Specifically targets extracellular EGF repeats of proteins such as NOTCH1, NOTCH3, FBN1, FBN2 and LTBP1. May regulate the transport of NOTCH1 and NOTCH3 to the plasma membrane and thereby the Notch signaling pathway. The protein is Protein O-glucosyltransferase 3 of Homo sapiens (Human).